Here is a 66-residue protein sequence, read N- to C-terminus: Large ribosomal subunit protein bL35 (66 aa).

It belongs to the bacterial ribosomal protein bL35 family.

This chain is Large ribosomal subunit protein bL35, found in Synechococcus sp. (strain JA-2-3B'a(2-13)) (Cyanobacteria bacterium Yellowstone B-Prime).